Here is an 88-residue protein sequence, read N- to C-terminus: UPF0297 protein BLi02868/BL02032 (88 aa).

Belongs to the UPF0297 family.

This Bacillus licheniformis (strain ATCC 14580 / DSM 13 / JCM 2505 / CCUG 7422 / NBRC 12200 / NCIMB 9375 / NCTC 10341 / NRRL NRS-1264 / Gibson 46) protein is UPF0297 protein BLi02868/BL02032.